The sequence spans 192 residues: Ribosome hibernation promotion factor (192 aa).

Residues 95 to 129 (RVNRKHKTHGEPEAFVAEVQEAPPENVDDVNAEPT) form a disordered region. A compositionally biased stretch (acidic residues) spans 120-129 (NVDDVNAEPT).

This sequence belongs to the HPF/YfiA ribosome-associated protein family. Long HPF subfamily. As to quaternary structure, interacts with 100S ribosomes.

It is found in the cytoplasm. Required for dimerization of active 70S ribosomes into 100S ribosomes in stationary phase; 100S ribosomes are translationally inactive and sometimes present during exponential growth. This Staphylococcus haemolyticus (strain JCSC1435) protein is Ribosome hibernation promotion factor.